The sequence spans 441 residues: Sec-independent protein translocase protein TatCo (441 aa).

The tract at residues 1–185 is disordered; the sequence is MADEERDAGL…LVGEAPESDQ (185 aa). A compositionally biased stretch (acidic residues) spans 13 to 22; it reads ADDETDASDD. The segment covering 51-62 has biased composition (basic and acidic residues); it reads TPRDETVTHGSD. The span at 75 to 104 shows a compositional bias: acidic residues; it reads DNGDDSDSDTDAAPDDADDSATDSDADSDD. Positions 105-117 are enriched in basic and acidic residues; that stretch reads EPRLLADDEHTSH. Acidic residues-rich tracts occupy residues 122–138 and 164–173; these read TYDD…DPDA and EDADFDDEDV. Transmembrane regions (helical) follow at residues 200–220, 276–296, 317–337, 357–377, 395–415, and 416–436; these read LAVV…GADI, VAGL…TYLF, LVLA…AIFA, FNLI…PLFV, RLLF…DPTG, and MAPI…LAAL.

This sequence belongs to the TatC family. In terms of assembly, forms a complex with TatA.

Its subcellular location is the cell membrane. Functionally, part of the twin-arginine translocation (Tat) system that transports large folded proteins containing a characteristic twin-arginine motif in their signal peptide across membranes. The protein is Sec-independent protein translocase protein TatCo of Haloferax volcanii (strain ATCC 29605 / DSM 3757 / JCM 8879 / NBRC 14742 / NCIMB 2012 / VKM B-1768 / DS2) (Halobacterium volcanii).